The primary structure comprises 131 residues: Protein ApaG (131 aa).

Positions 7–131 constitute an ApaG domain; that stretch reads PVKPYDLTVS…FLLAMPRTLH (125 aa).

This Bordetella bronchiseptica (strain ATCC BAA-588 / NCTC 13252 / RB50) (Alcaligenes bronchisepticus) protein is Protein ApaG.